The primary structure comprises 591 residues: Aspartate--tRNA(Asp/Asn) ligase (591 aa).

Glu-175 is a binding site for L-aspartate. Residues 199–202 form an aspartate region; that stretch reads QQYK. The L-aspartate site is built by Arg-221 and His-450. 221 to 223 is a binding site for ATP; the sequence is RDE. Glu-484 serves as a coordination point for ATP. Residue Arg-491 participates in L-aspartate binding. Residue 536-539 participates in ATP binding; it reads GVDR.

Belongs to the class-II aminoacyl-tRNA synthetase family. Type 1 subfamily. In terms of assembly, homodimer.

The protein resides in the cytoplasm. It carries out the reaction tRNA(Asx) + L-aspartate + ATP = L-aspartyl-tRNA(Asx) + AMP + diphosphate. Aspartyl-tRNA synthetase with relaxed tRNA specificity since it is able to aspartylate not only its cognate tRNA(Asp) but also tRNA(Asn). Reaction proceeds in two steps: L-aspartate is first activated by ATP to form Asp-AMP and then transferred to the acceptor end of tRNA(Asp/Asn). In Rhodopseudomonas palustris (strain ATCC BAA-98 / CGA009), this protein is Aspartate--tRNA(Asp/Asn) ligase.